We begin with the raw amino-acid sequence, 180 residues long: MSRVGRLPIAVPAGITVTVTPDNVVTVKGPKGELVKTMHKDINIAVENNEVIVTRPSDQKAHRALHGLTRALINNMVIGVNEGYQKTLELVGVGYRAQLQGKKLVMNLGYSHPVEIEPIDGITFETPAATKVIVKGIDKEKVGAAAADIRKWRLPEPYKGKGIKFENEVIRRKEGKTGKK.

Belongs to the universal ribosomal protein uL6 family. Part of the 50S ribosomal subunit.

In terms of biological role, this protein binds to the 23S rRNA, and is important in its secondary structure. It is located near the subunit interface in the base of the L7/L12 stalk, and near the tRNA binding site of the peptidyltransferase center. The chain is Large ribosomal subunit protein uL6 from Clostridium botulinum (strain Alaska E43 / Type E3).